We begin with the raw amino-acid sequence, 505 residues long: Glycerol kinase (505 aa).

Threonine 17 is an ADP binding site. Residues threonine 17, threonine 18, and serine 19 each contribute to the ATP site. Threonine 17 contributes to the sn-glycerol 3-phosphate binding site. ADP is bound at residue arginine 21. Residues arginine 87, glutamate 88, tyrosine 139, and aspartate 250 each contribute to the sn-glycerol 3-phosphate site. Residues arginine 87, glutamate 88, tyrosine 139, aspartate 250, and glutamine 251 each contribute to the glycerol site. The ADP site is built by threonine 272 and glycine 315. Positions 272, 315, 319, and 416 each coordinate ATP. ADP-binding residues include glycine 416 and asparagine 420.

This sequence belongs to the FGGY kinase family.

It carries out the reaction glycerol + ATP = sn-glycerol 3-phosphate + ADP + H(+). It functions in the pathway polyol metabolism; glycerol degradation via glycerol kinase pathway; sn-glycerol 3-phosphate from glycerol: step 1/1. With respect to regulation, inhibited by fructose 1,6-bisphosphate (FBP). Functionally, key enzyme in the regulation of glycerol uptake and metabolism. Catalyzes the phosphorylation of glycerol to yield sn-glycerol 3-phosphate. In Azotobacter vinelandii (strain DJ / ATCC BAA-1303), this protein is Glycerol kinase.